The sequence spans 219 residues: PRELI domain-containing protein 1, mitochondrial (219 aa).

A PRELI/MSF1 domain is found at 36-174 (TEDIVHREVT…ILAKLQGEAP (139 aa)).

In terms of assembly, forms a complex with TRIAP1 in the mitochondrion intermembrane space. Interacts with OPA1 and AIFM1. Highly expressed in fetal liver; less expressed in fetal brain, lung, and kidney. At the adult stage, expression is drastically reduced in the liver but highly expressed in the spleen, brain, lung, lymph nodes and peripheral blood leukocytes.

The protein resides in the mitochondrion. It is found in the mitochondrion intermembrane space. The catalysed reaction is a 1,2-diacyl-sn-glycero-3-phosphate(in) = a 1,2-diacyl-sn-glycero-3-phosphate(out). Involved in the modulation of the mitochondrial apoptotic pathway by ensuring the accumulation of cardiolipin (CL) in mitochondrial membranes. In vitro, the TRIAP1:PRELID1 complex mediates the transfer of phosphatidic acid (PA) between liposomes and probably functions as a PA transporter across the mitochondrion intermembrane space to provide PA for CL synthesis in the inner membrane. Regulates the mitochondrial apoptotic pathway in primary Th cells. Regulates Th cell differentiation by down-regulating STAT6 thereby reducing IL-4-induced Th2 cell number. May be important for the development of vital and immunocompetent organs. The sequence is that of PRELI domain-containing protein 1, mitochondrial (PRELID1) from Homo sapiens (Human).